Consider the following 188-residue polypeptide: Peptidyl-prolyl cis-trans isomerase (188 aa).

The first 20 residues, 1-20, serve as a signal peptide directing secretion; that stretch reads MLKRVAIVLGGLLISAHALA. One can recognise a PPIase cyclophilin-type domain in the interval 21–181; the sequence is NTMVEMKTNL…QPVKIISVQI (161 aa).

Belongs to the cyclophilin-type PPIase family.

The protein resides in the periplasm. The catalysed reaction is [protein]-peptidylproline (omega=180) = [protein]-peptidylproline (omega=0). PPIases accelerate the folding of proteins. It catalyzes the cis-trans isomerization of proline imidic peptide bonds in oligopeptides. This protein is not essential for growth. Presumably plays a role in signal transduction. The polypeptide is Peptidyl-prolyl cis-trans isomerase (rotA) (Acinetobacter baylyi (strain ATCC 33305 / BD413 / ADP1)).